Here is a 418-residue protein sequence, read N- to C-terminus: Glutamyl-tRNA reductase (418 aa).

Residues 49–52, serine 109, 114–116, and glutamine 120 contribute to the substrate site; these read TCNR and EPQ. Cysteine 50 functions as the Nucleophile in the catalytic mechanism. 189–194 contacts NADP(+); that stretch reads GAGETI.

Belongs to the glutamyl-tRNA reductase family. In terms of assembly, homodimer.

It carries out the reaction (S)-4-amino-5-oxopentanoate + tRNA(Glu) + NADP(+) = L-glutamyl-tRNA(Glu) + NADPH + H(+). Its pathway is porphyrin-containing compound metabolism; protoporphyrin-IX biosynthesis; 5-aminolevulinate from L-glutamyl-tRNA(Glu): step 1/2. Functionally, catalyzes the NADPH-dependent reduction of glutamyl-tRNA(Glu) to glutamate 1-semialdehyde (GSA). This is Glutamyl-tRNA reductase from Salmonella heidelberg (strain SL476).